The chain runs to 353 residues: Protein RecA (353 aa).

ATP is bound at residue 67–74; the sequence is GPESSGKT.

It belongs to the RecA family.

The protein localises to the cytoplasm. In terms of biological role, can catalyze the hydrolysis of ATP in the presence of single-stranded DNA, the ATP-dependent uptake of single-stranded DNA by duplex DNA, and the ATP-dependent hybridization of homologous single-stranded DNAs. It interacts with LexA causing its activation and leading to its autocatalytic cleavage. The chain is Protein RecA from Shewanella loihica (strain ATCC BAA-1088 / PV-4).